The primary structure comprises 141 residues: Mite group 2 allergen Tyr p 2 (141 aa).

A signal peptide spans 1-15; that stretch reads MKFLILFALVAVAAA. 3 disulfides stabilise this stretch: cysteine 23/cysteine 132, cysteine 36/cysteine 41, and cysteine 87/cysteine 92. Residue asparagine 103 is glycosylated (N-linked (GlcNAc...) asparagine).

Belongs to the NPC2 family.

It localises to the secreted. The protein is Mite group 2 allergen Tyr p 2 of Tyrophagus putrescentiae (Mold mite).